A 485-amino-acid chain; its full sequence is WD repeat-containing protein 13 (485 aa).

Phosphoserine occurs at positions 70, 74, and 79. At arginine 114 the chain carries Asymmetric dimethylarginine; alternate. An Omega-N-methylarginine; alternate modification is found at arginine 114. WD repeat units lie at residues 170–210, 215–254, 302–341, 406–446, and 451–484; these read HVDE…PTVL, GHTR…CIRE, KLTG…GKLT, HPVR…KAAV, and GHSA…RREQ.

It localises to the nucleus. This Pongo abelii (Sumatran orangutan) protein is WD repeat-containing protein 13 (WDR13).